A 300-amino-acid chain; its full sequence is Diphthine methyl ester synthase (300 aa).

Residues leucine 9, aspartate 85, glycine 88, serine 113 to valine 114, and leucine 164 contribute to the S-adenosyl-L-methionine site. Serine 172 bears the Phosphoserine mark. Residues leucine 222 and histidine 247 each coordinate S-adenosyl-L-methionine. Position 298 is a phosphoserine (serine 298).

This sequence belongs to the diphthine synthase family.

It localises to the cytoplasm. The enzyme catalyses 2-[(3S)-amino-3-carboxypropyl]-L-histidyl-[translation elongation factor 2] + 4 S-adenosyl-L-methionine = diphthine methyl ester-[translation elongation factor 2] + 4 S-adenosyl-L-homocysteine + 3 H(+). The protein operates within protein modification; peptidyl-diphthamide biosynthesis. Functionally, S-adenosyl-L-methionine-dependent methyltransferase that catalyzes four methylations of the modified target histidine residue in translation elongation factor 2 (EF-2), to form an intermediate called diphthine methyl ester. The four successive methylation reactions represent the second step of diphthamide biosynthesis. This is Diphthine methyl ester synthase (DPH5) from Saccharomyces cerevisiae (strain ATCC 204508 / S288c) (Baker's yeast).